The primary structure comprises 602 residues: GTP-binding protein 2 (602 aa).

Residues 16–64 (GGGPAVGGTLKARGAGSSSGCGGPKGKKKNGRNRGGKANNPPYLPPEAE) form a disordered region. The segment covering 40-50 (KGKKKNGRNRG) has biased composition (basic residues). The tr-type G domain maps to 170–398 (FLDLRVAVLG…LNILPPLTNS (229 aa)). Residues 179-186 (GNVDSGKS), 260-264 (DLAGH), and 316-319 (SKID) each bind GTP.

It belongs to the TRAFAC class translation factor GTPase superfamily. Classic translation factor GTPase family. GTPBP1 subfamily. As to expression, predominantly expressed in thymus, spleen, and testis. Expressed at lower levels in brain, lung, kidney, and ovary.

The protein is GTP-binding protein 2 of Homo sapiens (Human).